Here is a 1222-residue protein sequence, read N- to C-terminus: Probable disease resistance protein At5g45510 (1222 aa).

49-56 contacts ATP; it reads GEAGIGKT. Residues 122–183 are a coiled coil; the sequence is GERDEDEEEE…KLEAEKKLVD (62 aa). 4 stretches are compositionally biased toward basic and acidic residues: residues 171 to 205, 212 to 224, 263 to 279, and 286 to 322; these read AAEK…KEKT, GEDK…ERKP, RRQE…HAEG, and SGEK…HEKV. 2 disordered regions span residues 171–225 and 263–327; these read AAEK…RKPY and RRQE…PPTI. A Phosphothreonine modification is found at T293. LRR repeat units follow at residues 654-676, 677-699, 702-724, 725-747, 785-806, 813-835, 836-856, 861-883, 884-906, 907-929, and 931-951; these read LLRV…KALT, KLNT…FFES, ELRS…SGLK, ELHC…QELV, KLQH…QDSA, SLTR…KPLS, GLQI…EVCF, ELKT…EDLS, SLNE…EKLE, NLEV…FEKM, and YLRV…PADT.

Belongs to the disease resistance NB-LRR family.

In terms of biological role, probable disease resistance protein. The sequence is that of Probable disease resistance protein At5g45510 from Arabidopsis thaliana (Mouse-ear cress).